The sequence spans 147 residues: Nucleoside diphosphate kinase (147 aa).

ATP is bound by residues Lys-9, Phe-57, Arg-85, Thr-91, Arg-102, and Asn-112. Residue His-115 is the Pros-phosphohistidine intermediate of the active site.

The protein belongs to the NDK family. In terms of assembly, homotetramer. The cofactor is Mg(2+).

It is found in the cytoplasm. The catalysed reaction is a 2'-deoxyribonucleoside 5'-diphosphate + ATP = a 2'-deoxyribonucleoside 5'-triphosphate + ADP. It catalyses the reaction a ribonucleoside 5'-diphosphate + ATP = a ribonucleoside 5'-triphosphate + ADP. Its function is as follows. Major role in the synthesis of nucleoside triphosphates other than ATP. The ATP gamma phosphate is transferred to the NDP beta phosphate via a ping-pong mechanism, using a phosphorylated active-site intermediate. This chain is Nucleoside diphosphate kinase, found in Thermosipho africanus (strain TCF52B).